The sequence spans 186 residues: GTP cyclohydrolase 1 2 (186 aa).

The protein belongs to the GTP cyclohydrolase I family. Homomer.

It carries out the reaction GTP + H2O = 7,8-dihydroneopterin 3'-triphosphate + formate + H(+). It functions in the pathway cofactor biosynthesis; 7,8-dihydroneopterin triphosphate biosynthesis; 7,8-dihydroneopterin triphosphate from GTP: step 1/1. This Pseudomonas putida (strain ATCC 47054 / DSM 6125 / CFBP 8728 / NCIMB 11950 / KT2440) protein is GTP cyclohydrolase 1 2.